The primary structure comprises 495 residues: Keratin, type II cytoskeletal 74 (495 aa).

The head stretch occupies residues 1-105; sequence MASCHTAGHR…DPEIQKVRAQ (105 aa). The tract at residues 106-141 is coil 1A; the sequence is EREQIKALNDKFASFIDKVRFLEQQNQVLQTKWELL. The IF rod domain maps to 106-419; that stretch reads EREQIKALND…KLLEGEENRM (314 aa). The interval 142-160 is linker 1; that stretch reads QQLDLSNCRRNLEPVYEAH. Residues 161-252 form a coil 1B region; the sequence is ISNLRKQLEM…CLYDEEISQL (92 aa). Residues 253 to 276 are linker 12; it reads QTHASETSVILSMDNNRDLDLAGI. The coil 2 stretch occupies residues 277-415; that stretch reads IAEVRAHYED…ATYRKLLEGE (139 aa). A tail region spans residues 416 to 495; it reads ENRMSGENPS…AAGTLARKTT (80 aa). A disordered region spans residues 449 to 495; it reads DSEAGNAVGSPSTPRNSQSKTRGSSVDPRDAQDESAAAAGTLARKTT. The span at 457–472 shows a compositional bias: polar residues; it reads GSPSTPRNSQSKTRGS.

This sequence belongs to the intermediate filament family. In terms of assembly, heterotetramer of two type I and two type II keratins. Expressed in epidermis with a particularly strong staining in the nail matrix, nail bed and hyponychium (at protein level).

Has a role in hair formation. Specific component of keratin intermediate filaments in the inner root sheath (IRS) of the hair follicle. This Mus musculus (Mouse) protein is Keratin, type II cytoskeletal 74.